A 102-amino-acid chain; its full sequence is Protamine-2 (102 aa).

Residues Ser8, Ser10, and Ser37 each carry the phosphoserine modification. A disordered region spans residues 16-102 (VYGQQLRGQE…RTRRRRCRRH (87 aa)). Positions 49–102 (GHSHYRRRHCSRRRLHRIHRQQHRSCGRRRRRSCRQRRRHRRGCRTRRRRCRRH) are enriched in basic residues.

This sequence belongs to the protamine P2 family. As to quaternary structure, interacts with TDRP. Proteolytic processing into mature chains is required for histone eviction during spermatogenesis. Transition proteins (TNP1 and TNP2) are required for processing. In terms of tissue distribution, testis.

It is found in the nucleus. The protein resides in the chromosome. Its function is as follows. Protamines substitute for histones in the chromatin of sperm during the haploid phase of spermatogenesis. They compact sperm DNA into a highly condensed, stable and inactive complex. The sequence is that of Protamine-2 (PRM2) from Hylobates lar (Lar gibbon).